We begin with the raw amino-acid sequence, 21 residues long: GLFGKILGVGKKVLCGLSGMC.

Expressed by the skin glands.

It is found in the secreted. In terms of biological role, antimicrobial peptide active against the Gram-positive bacterium S.aureus (MIC=12.5 uM) and against the Gram-negative bacteria E.coli (MIC=3 uM). Has antifungal activity against C.albicans (MIC=50 uM). Has some hemolytic activity against human erythrocytes (LC(50)=40 uM). The chain is Nigrocin-2GRb from Odorrana grahami (Yunnanfu frog).